The chain runs to 372 residues: Glutamate 5-kinase (372 aa).

An ATP-binding site is contributed by Lys-14. Residues Ser-55, Asp-142, and Asn-154 each contribute to the substrate site. ATP-binding positions include 174–175 and 216–222; these read SD and TGGMETK. One can recognise a PUA domain in the interval 279 to 357; sequence QGSIIVDLGA…WEIADVLGHK (79 aa).

This sequence belongs to the glutamate 5-kinase family.

It is found in the cytoplasm. The enzyme catalyses L-glutamate + ATP = L-glutamyl 5-phosphate + ADP. It participates in amino-acid biosynthesis; L-proline biosynthesis; L-glutamate 5-semialdehyde from L-glutamate: step 1/2. Catalyzes the transfer of a phosphate group to glutamate to form L-glutamate 5-phosphate. In Carboxydothermus hydrogenoformans (strain ATCC BAA-161 / DSM 6008 / Z-2901), this protein is Glutamate 5-kinase.